Reading from the N-terminus, the 128-residue chain is DNA polymerase epsilon subunit 3 (128 aa).

Residues 98–110 (EKKESKASKKDSN) are compositionally biased toward basic and acidic residues. The segment at 98–128 (EKKESKASKKDSNTAENANASATATAEEAPE) is disordered. The span at 111–128 (TAENANASATATAEEAPE) shows a compositional bias: low complexity.

As to quaternary structure, homodimer. Component of the DNA polymerase epsilon complex consisting of four subunits: the catalytic subunit PolE1/DNApol-epsilon255 and the accessory subunits PolE2/DNApol-epsilon58, Chrac-14/DNApolE3 and PolE4. Component of the chromatin accessibility complex (CHRAC), composed of Chrac-14, Chrac-16, Acf and Iswi. Forms an heterodimer with Chrac-16. The Chrac-14/Chrac-16 heterodimer interacts with Acf (via N-terminus). Interacts directly with Iswi and this interaction is further stabilized by association with Chrac-16. Component of the Ada2a-containing (ATAC) complex composed of at least Ada2a, Atac1, Hcf, Ada3, Gcn5, Mocs2B, Charac-14, Atac3, Atac2, NC2beta and wds. Interacts with cid.

It is found in the nucleus. Functionally, accessory component of the DNA polymerase epsilon complex. Participates in DNA repair and in chromosomal DNA replication. Histone-like protein which promotes nucleosome sliding of ATP-dependent nucleosome remodeling complexes. Part of the chromatin-accessibility complex (CHRAC) which uses energy/ATP to increase the general accessibility of DNA in chromatin. As a heterodimer with Chrac-16, binds DNA and facilitates nucleosome sliding by Acf. Has a role in DNA damage response by preventing cid mislocalization to chromatin. In Drosophila melanogaster (Fruit fly), this protein is DNA polymerase epsilon subunit 3.